We begin with the raw amino-acid sequence, 431 residues long: Histidinol dehydrogenase (431 aa).

The NAD(+) site is built by Tyr-124, Gln-187, and Asn-210. Positions 236, 258, and 261 each coordinate substrate. Gln-258 and His-261 together coordinate Zn(2+). Catalysis depends on proton acceptor residues Glu-325 and His-326. Substrate-binding residues include His-326, Asp-359, Glu-413, and His-418. Asp-359 provides a ligand contact to Zn(2+). Residue His-418 participates in Zn(2+) binding.

It belongs to the histidinol dehydrogenase family. Requires Zn(2+) as cofactor.

The catalysed reaction is L-histidinol + 2 NAD(+) + H2O = L-histidine + 2 NADH + 3 H(+). Its pathway is amino-acid biosynthesis; L-histidine biosynthesis; L-histidine from 5-phospho-alpha-D-ribose 1-diphosphate: step 9/9. Catalyzes the sequential NAD-dependent oxidations of L-histidinol to L-histidinaldehyde and then to L-histidine. This chain is Histidinol dehydrogenase, found in Legionella pneumophila (strain Paris).